The sequence spans 74 residues: Homeobox protein Hox-B8 (74 aa).

Positions 1 to 24 are enriched in low complexity; that stretch reads YTDCKLAASGLGEEAESSEQSPSP. Positions 1-28 are disordered; sequence YTDCKLAASGLGEEAESSEQSPSPTQLF. The Antp-type hexapeptide signature appears at 27–32; it reads LFPWMR. The homeobox DNA-binding region spans 39–74; that stretch reads RRRGRQTYSRYQTLELEKEFLFNPYLTRKRRIEVSR.

Belongs to the Antp homeobox family.

It localises to the nucleus. In terms of biological role, sequence-specific transcription factor which is part of a developmental regulatory system that provides cells with specific positional identities on the anterior-posterior axis. This is Homeobox protein Hox-B8 (HOXB8) from Gallus gallus (Chicken).